Here is a 558-residue protein sequence, read N- to C-terminus: Polypeptide N-acetylgalactosaminyltransferase 16 (558 aa).

The Cytoplasmic portion of the chain corresponds to 1-6 (MRKIRA). A helical; Signal-anchor for type II membrane protein transmembrane segment spans residues 7–26 (NAIAILTVAWILGTFYYLWQ). Over 27–558 (DNRAHAASSG…AQQWQLLPHT (532 aa)) the chain is Lumenal. The disordered stretch occupies residues 33–54 (ASSGGRGAQRAGRRSEQLREDR). Basic and acidic residues predominate over residues 45 to 54 (RRSEQLREDR). Cystine bridges form between Cys-113–Cys-340, Cys-331–Cys-409, Cys-441–Cys-460, Cys-486–Cys-506, and Cys-530–Cys-543. The tract at residues 122-227 (LPATSVIITF…TEWLPPMLQR (106 aa)) is catalytic subdomain A. Substrate is bound by residues Asp-163 and Arg-188. Residue Asp-211 coordinates Mn(2+). Position 212 (Ser-212) interacts with substrate. Mn(2+) is bound at residue His-213. Residues 286-348 (PIRTPVIAGG…PCSRVGHVFR (63 aa)) form a catalytic subdomain B region. Residue Trp-317 coordinates substrate. His-345 lines the Mn(2+) pocket. Substrate is bound by residues Arg-348, His-351, and Tyr-353. In terms of domain architecture, Ricin B-type lectin spans 428-555 (KEALPGIIKQ…DAQAQQWQLL (128 aa)).

The protein belongs to the glycosyltransferase 2 family. GalNAc-T subfamily. Mn(2+) is required as a cofactor.

Its subcellular location is the golgi apparatus membrane. The catalysed reaction is L-seryl-[protein] + UDP-N-acetyl-alpha-D-galactosamine = a 3-O-[N-acetyl-alpha-D-galactosaminyl]-L-seryl-[protein] + UDP + H(+). The enzyme catalyses L-threonyl-[protein] + UDP-N-acetyl-alpha-D-galactosamine = a 3-O-[N-acetyl-alpha-D-galactosaminyl]-L-threonyl-[protein] + UDP + H(+). The protein operates within protein modification; protein glycosylation. In terms of biological role, catalyzes the initial reaction in O-linked oligosaccharide biosynthesis, the transfer of an N-acetyl-D-galactosamine residue to a serine or threonine residue on the protein receptor. The polypeptide is Polypeptide N-acetylgalactosaminyltransferase 16 (GALNT16) (Homo sapiens (Human)).